The chain runs to 283 residues: Octanoyl-[GcvH]:protein N-octanoyltransferase (283 aa).

Residues 42 to 248 (GQSDAVVRTW…TLQSFGGELY (207 aa)) form the BPL/LPL catalytic domain. Cys147 (acyl-thioester intermediate) is an active-site residue.

This sequence belongs to the octanoyltransferase LipL family.

It carries out the reaction N(6)-octanoyl-L-lysyl-[glycine-cleavage complex H protein] + L-lysyl-[lipoyl-carrier protein] = N(6)-octanoyl-L-lysyl-[lipoyl-carrier protein] + L-lysyl-[glycine-cleavage complex H protein]. It participates in protein modification; protein lipoylation via endogenous pathway; protein N(6)-(lipoyl)lysine from octanoyl-[acyl-carrier-protein]. Functionally, catalyzes the amidotransfer (transamidation) of the octanoyl moiety from octanoyl-GcvH to the lipoyl domain of the E2 subunit of lipoate-dependent enzymes. The protein is Octanoyl-[GcvH]:protein N-octanoyltransferase of Geobacillus kaustophilus (strain HTA426).